An 85-amino-acid polypeptide reads, in one-letter code: Beta-insect depressant toxin Lqh-dprIT3b (85 aa).

The signal sequence occupies residues 1-21 (MKLLLLLTISASMLIEGLVNA). The region spanning 22 to 82 (DGYIRGGDGC…EWDYETNTCG (61 aa)) is the LCN-type CS-alpha/beta domain. Intrachain disulfides connect Cys-31/Cys-81, Cys-35/Cys-56, Cys-42/Cys-63, and Cys-46/Cys-65. Gly-82 bears the Glycine amide mark.

The protein belongs to the long (4 C-C) scorpion toxin superfamily. Sodium channel inhibitor family. Beta subfamily. In terms of tissue distribution, expressed by the venom gland.

The protein localises to the secreted. Functionally, depressant insect beta-toxins cause a transient contraction paralysis followed by a slow flaccid paralysis. They bind voltage-independently at site-4 of sodium channels (Nav) and block action potentials, primarily by depolarizing the axonal membrane and suppressing the sodium current. This depressant toxin is active only on insects. It is found in a relatively small amount in the venom, and its activity on insects is 10-fold higher compared to other known depressant toxins. The sequence is that of Beta-insect depressant toxin Lqh-dprIT3b from Leiurus hebraeus (Hebrew deathstalker scorpion).